An 84-amino-acid polypeptide reads, in one-letter code: Large ribosomal subunit protein bL27 (84 aa).

The segment at 1–21 is disordered; that stretch reads MAHKKGVGSSRNGRDSDGQRL.

The protein belongs to the bacterial ribosomal protein bL27 family.

This is Large ribosomal subunit protein bL27 from Trichlorobacter lovleyi (strain ATCC BAA-1151 / DSM 17278 / SZ) (Geobacter lovleyi).